The sequence spans 385 residues: DNA replication and repair protein RecF (385 aa).

An ATP-binding site is contributed by 30–37; that stretch reads GPNGYGKT.

This sequence belongs to the RecF family.

Its subcellular location is the cytoplasm. Its function is as follows. The RecF protein is involved in DNA metabolism; it is required for DNA replication and normal SOS inducibility. RecF binds preferentially to single-stranded, linear DNA. It also seems to bind ATP. This chain is DNA replication and repair protein RecF, found in Mycobacterium bovis (strain ATCC BAA-935 / AF2122/97).